The following is a 707-amino-acid chain: Ribosomal RNA large subunit methyltransferase K/L (707 aa).

Residues 44-155 form the THUMP domain; it reads VIYNLCLWSR…NDILTVSFDL (112 aa).

Belongs to the methyltransferase superfamily. RlmKL family.

It localises to the cytoplasm. The enzyme catalyses guanosine(2445) in 23S rRNA + S-adenosyl-L-methionine = N(2)-methylguanosine(2445) in 23S rRNA + S-adenosyl-L-homocysteine + H(+). It catalyses the reaction guanosine(2069) in 23S rRNA + S-adenosyl-L-methionine = N(2)-methylguanosine(2069) in 23S rRNA + S-adenosyl-L-homocysteine + H(+). Its function is as follows. Specifically methylates the guanine in position 2445 (m2G2445) and the guanine in position 2069 (m7G2069) of 23S rRNA. The sequence is that of Ribosomal RNA large subunit methyltransferase K/L from Legionella pneumophila (strain Paris).